The primary structure comprises 269 residues: Phosphonates import ATP-binding protein PhnC (269 aa).

In terms of domain architecture, ABC transporter spans 2-245 (LVVEGLTCRF…VARELYDLEA (244 aa)). 34–41 (GRSGAGKS) contributes to the ATP binding site.

Belongs to the ABC transporter superfamily. Phosphonates importer (TC 3.A.1.9.1) family. As to quaternary structure, the complex is composed of two ATP-binding proteins (PhnC), two transmembrane proteins (PhnE) and a solute-binding protein (PhnD).

The protein resides in the cell inner membrane. It catalyses the reaction phosphonate(out) + ATP + H2O = phosphonate(in) + ADP + phosphate + H(+). In terms of biological role, part of the ABC transporter complex PhnCDE involved in phosphonates import. Responsible for energy coupling to the transport system. In Bradyrhizobium diazoefficiens (strain JCM 10833 / BCRC 13528 / IAM 13628 / NBRC 14792 / USDA 110), this protein is Phosphonates import ATP-binding protein PhnC.